Consider the following 206-residue polypeptide: Max dimerization protein 3 (206 aa).

Residues 8 to 25 form an interaction with SIN3A and SIN3B region; it reads IQVLLQAAEFLERREREA. Residues 57–109 enclose the bHLH domain; sequence SGRHVHNELEKRRRAQLKRCLEQLRQQMPLGVDHTRYTTLSLLRGARMHIQKL.

As to quaternary structure, efficient DNA binding requires dimerization with another bHLH protein. Binds DNA as a heterodimer with MAX. Interacts with SIN3A AND SIN3B. Interacts with RNF17.

It localises to the nucleus. Transcriptional repressor. Binds with MAX to form a sequence-specific DNA-binding protein complex which recognizes the core sequence 5'-CAC[GA]TG-3'. Antagonizes MYC transcriptional activity by competing for MAX and suppresses MYC dependent cell transformation. The chain is Max dimerization protein 3 (Mxd3) from Rattus norvegicus (Rat).